Consider the following 632-residue polypeptide: Extracellular metalloproteinase 2 (632 aa).

The first 19 residues, 1-19, serve as a signal peptide directing secretion; it reads MHGLLLAGLAAALPLGVAG. The propeptide occupies 20–244; the sequence is LPARQQSGLS…VHNVVDYVAS (225 aa). N-linked (GlcNAc...) asparagine glycosylation occurs at N270. A Zn(2+)-binding site is contributed by H429. The active site involves E430. H433 contacts Zn(2+).

Belongs to the peptidase M36 family. Zn(2+) serves as cofactor.

Its subcellular location is the secreted. Secreted metalloproteinase probably acting as a virulence factor. This chain is Extracellular metalloproteinase 2 (MEP2), found in Trichophyton tonsurans (Scalp ringworm fungus).